We begin with the raw amino-acid sequence, 99 residues long: Ubiquitin-related modifier 1 homolog 2 (99 aa).

Residue G99 is modified to 1-thioglycine. G99 is covalently cross-linked (Glycyl lysine isopeptide (Gly-Lys) (interchain with K-? in acceptor proteins)).

The protein belongs to the URM1 family. In terms of processing, C-terminal thiocarboxylation occurs in 2 steps, it is first acyl-adenylated (-COAMP) via the hesA/moeB/thiF part of the MOCS3 homolog, then thiocarboxylated (-COSH) via the rhodanese domain of the MOCS3 homolog.

The protein localises to the cytoplasm. It participates in tRNA modification; 5-methoxycarbonylmethyl-2-thiouridine-tRNA biosynthesis. Functionally, acts as a sulfur carrier required for 2-thiolation of mcm(5)S(2)U at tRNA wobble positions of cytosolic tRNA(Lys), tRNA(Glu) and tRNA(Gln). Serves as sulfur donor in tRNA 2-thiolation reaction by being thiocarboxylated (-COSH) at its C-terminus by MOCS3. The sulfur is then transferred to tRNA to form 2-thiolation of mcm(5)S(2)U. Also acts as a ubiquitin-like protein (UBL) that is covalently conjugated via an isopeptide bond to lysine residues of target proteins. The thiocarboxylated form serves as substrate for conjugation and oxidative stress specifically induces the formation of UBL-protein conjugates. This chain is Ubiquitin-related modifier 1 homolog 2, found in Arabidopsis thaliana (Mouse-ear cress).